The following is a 614-amino-acid chain: 4-hydroxy-3-methylbut-2-en-1-yl diphosphate synthase (flavodoxin) (614 aa).

Positions 522, 525, 556, and 563 each coordinate [4Fe-4S] cluster.

Belongs to the IspG family. It depends on [4Fe-4S] cluster as a cofactor.

The catalysed reaction is (2E)-4-hydroxy-3-methylbut-2-enyl diphosphate + oxidized [flavodoxin] + H2O + 2 H(+) = 2-C-methyl-D-erythritol 2,4-cyclic diphosphate + reduced [flavodoxin]. It functions in the pathway isoprenoid biosynthesis; isopentenyl diphosphate biosynthesis via DXP pathway; isopentenyl diphosphate from 1-deoxy-D-xylulose 5-phosphate: step 5/6. In terms of biological role, converts 2C-methyl-D-erythritol 2,4-cyclodiphosphate (ME-2,4cPP) into 1-hydroxy-2-methyl-2-(E)-butenyl 4-diphosphate. This chain is 4-hydroxy-3-methylbut-2-en-1-yl diphosphate synthase (flavodoxin), found in Phocaeicola vulgatus (strain ATCC 8482 / DSM 1447 / JCM 5826 / CCUG 4940 / NBRC 14291 / NCTC 11154) (Bacteroides vulgatus).